A 476-amino-acid polypeptide reads, in one-letter code: Elongation factor Tu, chloroplastic (476 aa).

The N-terminal 67 residues, 1–67 (MAISAPAACS…QSTRRSFTVR (67 aa)), are a transit peptide targeting the chloroplast. In terms of domain architecture, tr-type G spans 77–281 (KPHVNIGTIG…AVDDYIPIPQ (205 aa)). A G1 region spans residues 86-93 (GHVDHGKT). 86 to 93 (GHVDHGKT) lines the GTP pocket. Threonine 94 carries the phosphothreonine modification. The G2 stretch occupies residues 127-131 (GITIN). The interval 148-151 (DCPG) is G3. GTP-binding positions include 148 to 152 (DCPGH) and 203 to 206 (NKED). Residues 203-206 (NKED) are G4. The interval 241–243 (SAL) is G5.

The protein belongs to the TRAFAC class translation factor GTPase superfamily. Classic translation factor GTPase family. EF-Tu/EF-1A subfamily. As to quaternary structure, interacts with PI5K2. Interacts with APD2.

The protein localises to the plastid. It localises to the chloroplast. Its function is as follows. This protein promotes the GTP-dependent binding of aminoacyl-tRNA to the A-site of ribosomes during protein biosynthesis. The sequence is that of Elongation factor Tu, chloroplastic (TUFA) from Arabidopsis thaliana (Mouse-ear cress).